Here is a 186-residue protein sequence, read N- to C-terminus: Large ribosomal subunit protein uL6 (186 aa).

The protein belongs to the universal ribosomal protein uL6 family. Part of the 50S ribosomal subunit.

Functionally, this protein binds to the 23S rRNA, and is important in its secondary structure. It is located near the subunit interface in the base of the L7/L12 stalk, and near the tRNA binding site of the peptidyltransferase center. This is Large ribosomal subunit protein uL6 from Sulfurisphaera tokodaii (strain DSM 16993 / JCM 10545 / NBRC 100140 / 7) (Sulfolobus tokodaii).